Consider the following 561-residue polypeptide: Amidophosphoribosyltransferase 2, chloroplastic (561 aa).

Residues 1 to 27 show a composition bias toward low complexity; the sequence is MAATSSISSSLSLNAKPNKLSNNNNNN. A disordered region spans residues 1–36; it reads MAATSSISSSLSLNAKPNKLSNNNNNNKPHRFLRNP. Residues 1 to 53 constitute a chloroplast transit peptide; sequence MAATSSISSSLSLNAKPNKLSNNNNNNKPHRFLRNPFLNPSSSSFSPLPASIS. The active-site Nucleophile is the Cys87. Positions 87 to 307 constitute a Glutamine amidotransferase type-2 domain; sequence CGVVGIYGDS…PGEVLVVDKD (221 aa). [4Fe-4S] cluster-binding residues include Cys323, Cys469, Cys520, and Cys523.

It in the C-terminal section; belongs to the purine/pyrimidine phosphoribosyltransferase family. The cofactor is [4Fe-4S] cluster. Mg(2+) serves as cofactor. As to expression, mostly expressed in leaves, and, to a lower extent, in cotyledons.

It localises to the plastid. It is found in the chloroplast stroma. The catalysed reaction is 5-phospho-beta-D-ribosylamine + L-glutamate + diphosphate = 5-phospho-alpha-D-ribose 1-diphosphate + L-glutamine + H2O. Its pathway is purine metabolism; IMP biosynthesis via de novo pathway; N(1)-(5-phospho-D-ribosyl)glycinamide from 5-phospho-alpha-D-ribose 1-diphosphate: step 1/2. With respect to regulation, inhibited by the phenyltriazole acetic acid compound [5-(4-chlorophenyl)-1-isopropyl-1H-[1,2,4]triazol-3-yl]-acetic acid (DAS734), a bleaching herbicide. Catalyzes the first committed step of 'de novo purine biosynthesis from glutamine. Required for chloroplast biogenesis and cell division. Confers sensitivity to the phenyltriazole acetic acid compound [5-(4-chlorophenyl)-1-isopropyl-1H-[1,2,4]triazol-3-yl]-acetic acid (DAS734), a bleaching herbicide. The chain is Amidophosphoribosyltransferase 2, chloroplastic (ASE2) from Arabidopsis thaliana (Mouse-ear cress).